Here is a 357-residue protein sequence, read N- to C-terminus: Olfactory receptor 2B2 (357 aa).

The Extracellular portion of the chain corresponds to 1 to 25; sequence MNWVNKSVPQEFILLVFSDQPWLEI. An N-linked (GlcNAc...) asparagine glycan is attached at N5. Residues 26 to 49 traverse the membrane as a helical segment; it reads PPFVMFLFSYILTIFGNLTIILVS. At 50 to 57 the chain is on the cytoplasmic side; sequence HVDFKLHT. Residues 58–79 traverse the membrane as a helical segment; sequence PMYFFLSNLSLLDLCYTTSTVP. Topologically, residues 80–100 are extracellular; it reads QMLVNICNTRKVISYGGCVAQ. C97 and C189 are joined by a disulfide. The chain crosses the membrane as a helical span at residues 101 to 120; that stretch reads LFIFLALGSTECLLLAVMCF. The Cytoplasmic segment spans residues 121–139; it reads DRFVAICRPLHYSIIMHQR. The chain crosses the membrane as a helical span at residues 140–158; the sequence is LCFQLAAASWISGFSNSVL. The Extracellular segment spans residues 159–195; sequence QSTWTLKMPLCGHKEVDHFFCEVPALLKLSCVDTTAN. The helical transmembrane segment at 196-219 threads the bilayer; that stretch reads EAELFFISVLFLLIPVTLILISYA. At 220 to 236 the chain is on the cytoplasmic side; it reads FIVQAVLRIQSAEGQRK. A helical transmembrane segment spans residues 237-259; it reads AFGTCGSHLIVVSLFYGTAISMY. The Extracellular portion of the chain corresponds to 260–272; it reads LQPPSPSSKDRGK. Residues 273–292 form a helical membrane-spanning segment; the sequence is MVSLFCGIIAPMLNPLIYTL. Residues 293–357 are Cytoplasmic-facing; that stretch reads RNKEVKEAFK…YCNLPQRKFP (65 aa).

Belongs to the G-protein coupled receptor 1 family.

It localises to the cell membrane. In terms of biological role, odorant receptor. The sequence is that of Olfactory receptor 2B2 (OR2B2) from Homo sapiens (Human).